Here is a 286-residue protein sequence, read N- to C-terminus: uncharacterized protein (286 aa).

Catalysis depends on His183, which acts as the Proton donor. Catalysis depends on Cys277, which acts as the Nucleophile.

Belongs to the DDAH family.

This is an uncharacterized protein from Bacillus subtilis (strain 168).